A 260-amino-acid polypeptide reads, in one-letter code: Trans-aconitate 2-methyltransferase (260 aa).

It belongs to the methyltransferase superfamily. Tam family.

The protein localises to the cytoplasm. It catalyses the reaction trans-aconitate + S-adenosyl-L-methionine = (E)-3-(methoxycarbonyl)pent-2-enedioate + S-adenosyl-L-homocysteine. Functionally, catalyzes the S-adenosylmethionine monomethyl esterification of trans-aconitate. The polypeptide is Trans-aconitate 2-methyltransferase (Paracidovorax citrulli (strain AAC00-1) (Acidovorax citrulli)).